Reading from the N-terminus, the 319-residue chain is Methionyl-tRNA formyltransferase (319 aa).

110–113 is a (6S)-5,6,7,8-tetrahydrofolate binding site; the sequence is SLLP.

This sequence belongs to the Fmt family.

It catalyses the reaction L-methionyl-tRNA(fMet) + (6R)-10-formyltetrahydrofolate = N-formyl-L-methionyl-tRNA(fMet) + (6S)-5,6,7,8-tetrahydrofolate + H(+). In terms of biological role, attaches a formyl group to the free amino group of methionyl-tRNA(fMet). The formyl group appears to play a dual role in the initiator identity of N-formylmethionyl-tRNA by promoting its recognition by IF2 and preventing the misappropriation of this tRNA by the elongation apparatus. This Geobacillus thermodenitrificans (strain NG80-2) protein is Methionyl-tRNA formyltransferase.